A 230-amino-acid chain; its full sequence is Cytidylate kinase (230 aa).

Residue 12–20 (GPSGAGKGT) participates in ATP binding.

It belongs to the cytidylate kinase family. Type 1 subfamily.

It is found in the cytoplasm. It catalyses the reaction CMP + ATP = CDP + ADP. It carries out the reaction dCMP + ATP = dCDP + ADP. The protein is Cytidylate kinase of Shewanella sp. (strain MR-7).